The sequence spans 102 residues: Small ribosomal subunit protein uS10 (102 aa).

The protein belongs to the universal ribosomal protein uS10 family. Part of the 30S ribosomal subunit.

Its function is as follows. Involved in the binding of tRNA to the ribosomes. This is Small ribosomal subunit protein uS10 from Thermococcus gammatolerans (strain DSM 15229 / JCM 11827 / EJ3).